We begin with the raw amino-acid sequence, 125 residues long: Large ribosomal subunit protein bL12 (125 aa).

The protein belongs to the bacterial ribosomal protein bL12 family. In terms of assembly, homodimer. Part of the ribosomal stalk of the 50S ribosomal subunit. Forms a multimeric L10(L12)X complex, where L10 forms an elongated spine to which 2 to 4 L12 dimers bind in a sequential fashion. Binds GTP-bound translation factors.

In terms of biological role, forms part of the ribosomal stalk which helps the ribosome interact with GTP-bound translation factors. Is thus essential for accurate translation. This chain is Large ribosomal subunit protein bL12, found in Mesorhizobium japonicum (strain LMG 29417 / CECT 9101 / MAFF 303099) (Mesorhizobium loti (strain MAFF 303099)).